Reading from the N-terminus, the 90-residue chain is Probable Fe(2+)-trafficking protein (90 aa).

It belongs to the Fe(2+)-trafficking protein family.

Could be a mediator in iron transactions between iron acquisition and iron-requiring processes, such as synthesis and/or repair of Fe-S clusters in biosynthetic enzymes. The chain is Probable Fe(2+)-trafficking protein from Leptothrix cholodnii (strain ATCC 51168 / LMG 8142 / SP-6) (Leptothrix discophora (strain SP-6)).